A 433-amino-acid polypeptide reads, in one-letter code: Nuclear distribution protein PAC1 (433 aa).

The LisH domain occupies Gln8 to Asp40. Residues Ser57–Arg84 are a coiled coil. WD repeat units follow at residues Ser103–Lys144, His146–Lys184, Gly188–Thr227, Gly230–Glu269, Gly272–Thr336, Gly339–Thr378, and Ala381–Lys429.

It belongs to the WD repeat LIS1/nudF family. As to quaternary structure, self-associates. Interacts with NDL1 and dynein.

The protein resides in the cytoplasm. The protein localises to the cytoskeleton. Its subcellular location is the spindle pole. Positively regulates the activity of the minus-end directed microtubule motor protein dynein. Plays a central role in positioning the mitotic spindle at the bud neck during cell division. Targets cytoplasmic dynein to microtubule plus ends, thereby promoting dynein-mediated microtubule sliding along the bud cortex and consequently the movement of the mitotic spindle to the bud neck. This chain is Nuclear distribution protein PAC1, found in Cryptococcus neoformans var. neoformans serotype D (strain B-3501A) (Filobasidiella neoformans).